The sequence spans 64 residues: Large ribosomal subunit protein bL35c (64 aa).

The protein belongs to the bacterial ribosomal protein bL35 family.

Its subcellular location is the plastid. The protein resides in the chloroplast. The polypeptide is Large ribosomal subunit protein bL35c (Cyanidium caldarium (Red alga)).